Here is a 326-residue protein sequence, read N- to C-terminus: N-acetyl-gamma-glutamyl-phosphate reductase (326 aa).

Cys-155 is a catalytic residue.

Belongs to the NAGSA dehydrogenase family. Type 1 subfamily.

Its subcellular location is the cytoplasm. The catalysed reaction is N-acetyl-L-glutamate 5-semialdehyde + phosphate + NADP(+) = N-acetyl-L-glutamyl 5-phosphate + NADPH + H(+). It functions in the pathway amino-acid biosynthesis; L-arginine biosynthesis; N(2)-acetyl-L-ornithine from L-glutamate: step 3/4. In terms of biological role, catalyzes the NADPH-dependent reduction of N-acetyl-5-glutamyl phosphate to yield N-acetyl-L-glutamate 5-semialdehyde. This Shewanella sp. (strain MR-4) protein is N-acetyl-gamma-glutamyl-phosphate reductase.